Here is a 433-residue protein sequence, read N- to C-terminus: Protein arginine N-methyltransferase 2 (433 aa).

The interval 1 to 20 is disordered; sequence MATSGDCPRSESQGEEPAEC. Interaction with ESR1 regions lie at residues 1–277 and 133–275; these read MATS…SALK and KESL…NLSA. Residues 30-89 enclose the SH3 domain; sequence VQPEEFVAIADYAATDETQLSFLRGEKILILRQTTADWWWGERAGCCGYIPANHVGKHVD. Asymmetric dimethylarginine is present on residues Arg61 and Arg72. The tract at residues 83–207 is interaction with RB1; the sequence is HVGKHVDEYD…DVVLPEKVDV (125 aa). In terms of domain architecture, SAM-dependent MTase PRMT-type spans 99–432; the sequence is DEEYFGSYGT…KVGEKVFPIW (334 aa). S-adenosyl-L-methionine-binding residues include His112, Arg121, Gly145, Glu168, and Glu197. Catalysis depends on residues Glu211 and Glu220.

Belongs to the class I-like SAM-binding methyltransferase superfamily. Protein arginine N-methyltransferase family. Self-associates. Interacts with RB1 and E2F1. Interacts with NCOA6 coactivator. Interacts (via SH3 domain) with PRMT8. Interacts with AR. Interacts with NFKBIA. Interacts with ESR1, ESR2, PGR, PPARG, RARA, RXRA and THRB. Interacts with HNRNPUL1. Widely expressed. Highly expressed in androgen target organs such as heart, prostate, skeletal muscle, ovary and spinal cord.

The protein resides in the cytoplasm. It is found in the nucleus. The protein localises to the nucleolus. The enzyme catalyses L-arginyl-[protein] + 2 S-adenosyl-L-methionine = N(omega),N(omega)-dimethyl-L-arginyl-[protein] + 2 S-adenosyl-L-homocysteine + 2 H(+). In terms of biological role, arginine methyltransferase that methylates the guanidino nitrogens of arginyl residues in proteins such as STAT3, FBL, histone H4. Acts as a coactivator (with NCOA2) of the androgen receptor (AR)-mediated transactivation. Acts as a coactivator (with estrogen) of estrogen receptor (ER)-mediated transactivation. Enhances PGR, PPARG, RARA-mediated transactivation. May inhibit NF-kappa-B transcription and promote apoptosis. Represses E2F1 transcriptional activity (in a RB1-dependent manner). May be involved in growth regulation. This is Protein arginine N-methyltransferase 2 (PRMT2) from Homo sapiens (Human).